We begin with the raw amino-acid sequence, 203 residues long: Probable GTP-binding protein EngB (203 aa).

The EngB-type G domain maps to 21-196; the sequence is GAPEIAFLGR…WKKIFEAAGT (176 aa). GTP-binding positions include 29–36, 55–59, 79–82, 146–149, and 175–177; these read GRSNVGKS, GRTQT, DLPG, TKID, and FSA. Mg(2+)-binding residues include Ser36 and Thr57.

It belongs to the TRAFAC class TrmE-Era-EngA-EngB-Septin-like GTPase superfamily. EngB GTPase family. Requires Mg(2+) as cofactor.

Necessary for normal cell division and for the maintenance of normal septation. The protein is Probable GTP-binding protein EngB of Koribacter versatilis (strain Ellin345).